The chain runs to 190 residues: Threonylcarbamoyl-AMP synthase (190 aa).

In terms of domain architecture, YrdC-like spans 7–190; the sequence is TGSIAAAVDL…ALTGELFRQG (184 aa).

It belongs to the SUA5 family. TsaC subfamily.

It is found in the cytoplasm. The catalysed reaction is L-threonine + hydrogencarbonate + ATP = L-threonylcarbamoyladenylate + diphosphate + H2O. Its function is as follows. Required for the formation of a threonylcarbamoyl group on adenosine at position 37 (t(6)A37) in tRNAs that read codons beginning with adenine. Catalyzes the conversion of L-threonine, HCO(3)(-)/CO(2) and ATP to give threonylcarbamoyl-AMP (TC-AMP) as the acyladenylate intermediate, with the release of diphosphate. This is Threonylcarbamoyl-AMP synthase from Salmonella choleraesuis (strain SC-B67).